We begin with the raw amino-acid sequence, 690 residues long: MKSLPPEMRQILGDCYPHIRELNPAQRSAIEAGYLESEDNYIIAIPTASGKTLLGIIAALKTVMEGGRVIYTVPLLSIQNEKIKEFRKLEEHGIRVGKDPRTSDIAVMVFESFDSLTRFSWNILREVDLLIVDEFHMIGEYTRGPVIESAITRARTLNPSVRIVALSATLSNMDEIAGWLDARVVEHDYRPVPLHREVLDTEMFGVREKNDVVLKVLERSLEDGSQTLAFVSTRRFTESLASHLADKISGKIPDDMVESFREVAGKVLEVPKSRGSPPTSTCLKLAECLEAGIAFHHAGLFNRQREIIEDEFRDGNILMITATPSLMYGVNLPSRTVVIRDYTRWTSQGPRRIPVFDYEQMSGRAGRPQYDDAGYSYLIARSHDEAMDLEEYYIRGEVERTTSRIIENRDALYRQIIAQVASGLSGTTEELADFFRNTFYGYQMVEGPFSDSFGMDSIQYEVENATEYLMRNRILYPGPEGFSATEFGLLIAKSNYSVETAIKLHQFASEMDEMDIYRLIYEITRTPDMPLISFKGRKSRDPVRDKLMEHGLFLMDVGNEEATAAALIEWINERTEYEIENAFHVYAASTRRSAYEASKIVKFFGKICEIMGVYRHSSQLEILSARLYYGVKEDAIPLVVGVRGLGRVRARKIIKTFGEDLRHVREDELKRIDGIGPKMAGAIRRYCERF.

Residues Gln26 and 45–52 each bind ATP; that span reads IPTASGKT. A Helicase ATP-binding domain is found at 32–188; that stretch reads AGYLESEDNY…WLDARVVEHD (157 aa). Residues 133–136 carry the DEAH box motif; the sequence is DEFH. The 210-residue stretch at 208–417 folds into the Helicase C-terminal domain; sequence EKNDVVLKVL…NRDALYRQII (210 aa).

It belongs to the helicase family. Hel308 subfamily. As to quaternary structure, monomer. Binds replication protein A (RPA), in presence and absence of DNA.

The enzyme catalyses Couples ATP hydrolysis with the unwinding of duplex DNA by translocating in the 3'-5' direction.. It catalyses the reaction ATP + H2O = ADP + phosphate + H(+). DNA-dependent ATPase and 3'-5' DNA helicase that may be involved in repair of stalled replication forks. Helicase with 3'-to 5'- polarity; able to unwind over 100 bp of DNA at 50 degrees Celsius. Unwinds forked DNA, preferentially on lagging strand forks; has weaker activity on Holliday junctions. Displaces the invading strand in DNA D-loops. Unwinds short oligonucleotides from dsDNA with 3'- but not blunt ends or 5'-ssDNA tails in an ATP-dependent manner. ATPase activity is stimulated by ssDNA but not dsDNA, protein binds ssDNA, dsDNA with 5'- or 3'-overhangs but not blunt ended dsDNA and replication forks. Replication forks bind both this protein and RPA. RPA does not stimulate the helicase activity of this protein. This chain is ATP-dependent DNA helicase Hel308, found in Methanothermobacter thermautotrophicus (strain ATCC 29096 / DSM 1053 / JCM 10044 / NBRC 100330 / Delta H) (Methanobacterium thermoautotrophicum).